Reading from the N-terminus, the 350-residue chain is Glyoxylate reductase 1 (350 aa).

Residue Thr-31 is modified to Phosphothreonine. Residues 173–174 (RI), 252–254 (TAR), and Asp-278 each bind NAD(+). Residue Arg-254 is part of the active site. Glu-283 is a catalytic residue. His-301 functions as the Proton donor in the catalytic mechanism. 301–304 (HMGT) provides a ligand contact to NAD(+).

It belongs to the D-isomer specific 2-hydroxyacid dehydrogenase family.

It localises to the cytoplasm. The protein localises to the nucleus. Its subcellular location is the mitochondrion. The enzyme catalyses glycolate + NAD(+) = glyoxylate + NADH + H(+). It catalyses the reaction glycolate + NADP(+) = glyoxylate + NADPH + H(+). It carries out the reaction (R)-glycerate + NAD(+) = 3-hydroxypyruvate + NADH + H(+). The catalysed reaction is (R)-glycerate + NADP(+) = 3-hydroxypyruvate + NADPH + H(+). Glyoxylate reductase that reversibly reduces glyoxylate to glycolate, or alternatively hydroxypyruvate to D-glycerate, using either NADPH or NADH as a cosubstrate. Does not act as a hydroxyisocaproate dehydrogenase even though it also has minor activity on alpha-ketoisocaproate. This is Glyoxylate reductase 1 from Saccharomyces cerevisiae (strain ATCC 204508 / S288c) (Baker's yeast).